A 458-amino-acid polypeptide reads, in one-letter code: A-type ATP synthase subunit B (458 aa).

Belongs to the ATPase alpha/beta chains family. In terms of assembly, has multiple subunits with at least A(3), B(3), C, D, E, F, H, I and proteolipid K(x).

The protein resides in the cell membrane. In terms of biological role, component of the A-type ATP synthase that produces ATP from ADP in the presence of a proton gradient across the membrane. The B chain is a regulatory subunit. The protein is A-type ATP synthase subunit B of Methanocorpusculum labreanum (strain ATCC 43576 / DSM 4855 / Z).